Consider the following 317-residue polypeptide: E3 ubiquitin-protein ligase NRDP1 (317 aa).

An RING-type; degenerate zinc finger spans residues 18-57 (CPICSGVLEEPVQAPHCEHAFCNACITQWFSQQQTCPVDR). An SIAH-type; degenerate zinc finger spans residues 78–138 (KLQIACDNAV…LPNHNCIKHL (61 aa)).

As to quaternary structure, interacts with USP8, ERBB3, PRKN and BIRC6. Interacts with CSF2RB, EPOR, IL3RA, MYD88 and TBK1. Interacts with CLEC16A. Post-translationally, autoubiquitinated. Autoubiquitination leads to proteasomal degradation. Deubiquitinated by USP8 to get stabilized which induces apoptosis. Detected in ovary, testis and prostate.

It carries out the reaction S-ubiquitinyl-[E2 ubiquitin-conjugating enzyme]-L-cysteine + [acceptor protein]-L-lysine = [E2 ubiquitin-conjugating enzyme]-L-cysteine + N(6)-ubiquitinyl-[acceptor protein]-L-lysine.. The protein operates within protein modification; protein ubiquitination. In terms of biological role, acts as E3 ubiquitin-protein ligase and regulates the degradation of target proteins. Polyubiquitinates MYD88. Negatively regulates MYD88-dependent production of pro-inflammatory cytokines. Can promote TRIF-dependent production of type I interferon and inhibits infection with vesicular stomatitis virus. Promotes also activation of TBK1 and IRF3. Involved in the ubiquitination of erythropoietin (EPO) and interleukin-3 (IL-3) receptors. Thus, through maintaining basal levels of cytokine receptors, RNF41 is involved in the control of hematopoietic progenitor cell differentiation into myeloerythroid lineages. Contributes to the maintenance of steady-state ERBB3 levels by mediating its growth factor-independent degradation. Involved in the degradation of the inhibitor of apoptosis BIRC6 and thus is an important regulator of cell death by promoting apoptosis. Also acts as a PRKN modifier that accelerates its degradation, resulting in a reduction of PRKN activity, influencing the balance of intracellular redox state. The RNF41-PRKN pathway regulates autophagosome-lysosome fusion during late mitophagy. Mitophagy is a selective form of autophagy necessary for mitochondrial quality control. The protein is E3 ubiquitin-protein ligase NRDP1 (RNF41) of Homo sapiens (Human).